Consider the following 110-residue polypeptide: Cytochrome c6 (110 aa).

Residues 1-25 (MKKTLSVLFTAFSFCVIGFTQVAFA) form the signal peptide. Heme c-binding residues include Cys39, Cys42, His43, and Met83.

This sequence belongs to the cytochrome c family. PetJ subfamily. As to quaternary structure, monomer. Post-translationally, binds 1 heme c group covalently per subunit.

The protein resides in the plastid. Its subcellular location is the chloroplast thylakoid lumen. Functions as an electron carrier between membrane-bound cytochrome b6-f and photosystem I in oxygenic photosynthesis. The chain is Cytochrome c6 (petJ) from Porphyra purpurea (Red seaweed).